Here is a 385-residue protein sequence, read N- to C-terminus: Cellulase CelDZ1 (385 aa).

Residues 6 to 26 (INKWYFFVGMLVIFAVIISLI) form a helical membrane-spanning segment. Substrate-binding positions include H87, 91–92 (WF), Y118, and H153. The active-site Proton donor is the E192. Y261 provides a ligand contact to substrate. E294 acts as the Nucleophile in catalysis. Substrate is bound by residues 300-301 (AS), W328, and 333-335 (KNE).

It belongs to the glycosyl hydrolase 5 (cellulase A) family. As to quaternary structure, monomer.

The protein localises to the cell membrane. The catalysed reaction is Endohydrolysis of (1-&gt;4)-beta-D-glucosidic linkages in cellulose, lichenin and cereal beta-D-glucans.. Activity is enhanced by 1mM Mn(2+), but is not affected by 1mM Ca(2+), Mg(2+), Zn(2+), K(+), Na(+) or Li(+). Activity is not inhibited by EDTA (in vitro). Functionally, thermostable endoglucanase that has high activity with soluble polymeric substrates containing beta-1,4-glycosidic bonds, such as carboxymethyl cellulose (CMC) and barley beta-D-glucan (in vitro). Has no activity with cellobiose and filter paper. Has no activity with substrates containing beta-1,3-linked glycans, such as laminarin. Likewise, lacks activity with xylan, galactomannan and pectin. The polypeptide is Cellulase CelDZ1 (Thermoanaerobacterium sp).